The chain runs to 261 residues: Probable septum site-determining protein MinC (261 aa).

The tract at residues 106–145 (RAPAAKPADEAEPAAVPAVETAAAPAAAAAPEQPSEPAPT) is disordered. The span at 118–144 (PAAVPAVETAAAPAAAAAPEQPSEPAP) shows a compositional bias: low complexity.

It belongs to the MinC family. As to quaternary structure, interacts with MinD and FtsZ.

Its function is as follows. Cell division inhibitor that blocks the formation of polar Z ring septums. Rapidly oscillates between the poles of the cell to destabilize FtsZ filaments that have formed before they mature into polar Z rings. Prevents FtsZ polymerization. The chain is Probable septum site-determining protein MinC from Burkholderia orbicola (strain AU 1054).